The following is a 305-amino-acid chain: Sulfate adenylyltransferase subunit 2 (305 aa).

The protein belongs to the PAPS reductase family. CysD subfamily. In terms of assembly, heterodimer composed of CysD, the smaller subunit, and CysN.

It carries out the reaction sulfate + ATP + H(+) = adenosine 5'-phosphosulfate + diphosphate. Its pathway is sulfur metabolism; hydrogen sulfide biosynthesis; sulfite from sulfate: step 1/3. In terms of biological role, with CysN forms the ATP sulfurylase (ATPS) that catalyzes the adenylation of sulfate producing adenosine 5'-phosphosulfate (APS) and diphosphate, the first enzymatic step in sulfur assimilation pathway. APS synthesis involves the formation of a high-energy phosphoric-sulfuric acid anhydride bond driven by GTP hydrolysis by CysN coupled to ATP hydrolysis by CysD. This chain is Sulfate adenylyltransferase subunit 2, found in Pseudomonas aeruginosa (strain LESB58).